A 385-amino-acid chain; its full sequence is AA13 family lytic polysaccharide monooxygenase NCU08746 (385 aa).

The signal sequence occupies residues 1 to 18; that stretch reads MKFSIISVALASAITVDA. Histidine 19 lines the Cu(2+) pocket. Residue histidine 19 is modified to Methylhistidine. Residues 19–248 form the Chitin-binding type-4 domain; the sequence is HGYLTIPFSR…AQVYLSCADI (230 aa). Cysteine 40 and cysteine 43 form a disulfide bridge. A glycan (N-linked (GlcNAc...) asparagine) is linked at asparagine 54. Cystine bridges form between cysteine 66-cysteine 245, cysteine 102-cysteine 203, cysteine 118-cysteine 145, cysteine 153-cysteine 161, cysteine 167-cysteine 173, and cysteine 181-cysteine 192. Histidine 109 is a Cu(2+) binding site. Cu(2+) is bound at residue tyrosine 242. A CBM20 domain is found at 278-385; the sequence is CTPAATVAVT…ESVAVESSWK (108 aa). Asparagine 365 carries N-linked (GlcNAc...) asparagine glycosylation.

It belongs to the polysaccharide monooxygenase AA13 family. It depends on Cu(2+) as a cofactor.

It is found in the secreted. It carries out the reaction starch + reduced acceptor + O2 = D-glucono-1,5-lactone-terminated malto-oligosaccharides + short-chain malto-oligosaccharides + acceptor + H2O.. Starch-active lytic polysaccharide monooxygenase that oxidizes the C1 position of starch substrates, but not in cellulose or chitin. Catalysis by LPMOs requires the reduction of the active-site copper from Cu(II) to Cu(I) by a reducing agent and H(2)O(2) or O(2) as a cosubstrate. The chain is AA13 family lytic polysaccharide monooxygenase NCU08746 from Neurospora crassa (strain ATCC 24698 / 74-OR23-1A / CBS 708.71 / DSM 1257 / FGSC 987).